The following is a 68-amino-acid chain: Alpha-conotoxin Lp1.1 (68 aa).

A signal peptide spans 1–21 (MGMRMMFIMFMLVVLATTVVT). A propeptide spanning residues 22–48 (FTSDRALDAMNAAASNKASRLIALAVR) is cleaved from the precursor. 2 cysteine pairs are disulfide-bonded: cysteine 50–cysteine 56 and cysteine 51–cysteine 64. Positions 52 to 54 (ARA) are lacks the Ser-Xaa-Pro motif that is crucial for potent interaction with nAChR. Position 65 is a glycine amide (glycine 65). A propeptide spanning residues 66-68 (GGR) is cleaved from the precursor.

Belongs to the conotoxin A superfamily. As to expression, expressed by the venom duct.

The protein resides in the secreted. Alpha-conotoxins act on postsynaptic membranes, they bind to the nicotinic acetylcholine receptors (nAChR) and thus inhibit them. Synthetic peptide inhibits alpha-6/alpha-3/beta-2 and alpha-3/beta-2 nicotinic acetylcholine receptors and causes uncoordinated movement when intramuscularly injected into goldfish. Has a distinct nAChR binding mode from other alpha-conotoxins, due to a different three residue motif (Ala-Xaa-Ala instead of the conserved Ser-Xaa-Pro motif). This Conus leopardus (Leopard cone) protein is Alpha-conotoxin Lp1.1.